The following is a 411-amino-acid chain: Zinc finger protein draculin (411 aa).

The segment at 1–33 is disordered; sequence MKNTTKPCRTEHHNAEGQRDRMEGNKKGETKAK. Positions 8 to 32 are enriched in basic and acidic residues; it reads CRTEHHNAEGQRDRMEGNKKGETKA. C2H2-type zinc fingers lie at residues 36-58, 64-86, 92-114, 120-142, 148-170, 176-198, 204-226, 232-254, 260-282, 288-310, 316-338, 344-366, and 372-394; these read VACS…MRVH, YRCD…LDIH, YTCD…MTLH, YKCD…MKLH, HKCE…LMVH, YTCD…MNIH, YTCD…MRFH, FTCD…MKIH, YTCD…MTHH, FHCD…IKTH, YSCL…EKRH, FMCF…LPVH, and YMCS…EKTH.

In terms of tissue distribution, specifically expressed in the hematopoietic lineage during embryogenesis; first expressed at the late blastula stage around the blastoderm margin. During gastrulation, restricted to the ventral mesoderm, the presumptive prechordal plate and the dorso-marginal cells of the organizer. At the 3-somite stage, strongly expressed in a caudal domain (marking the erythroid lineage) and a cephalic domain of the lateral mesoderm. At the 8- to 10-somite stage, caudal expression is in two bands of lateral mesoderm which later converge at the midline. Anterior expression is also in two bands of lateral mesoderm which converge as two patches at the midline by the 15-somite stage, with increased scattering of single cells (macrophage precursors) away from the midline to the yolksac. Once at the yolksac, expression is lost. By 20-24 hours post-fertilization (hpf), expressed in proerythroblasts in the erythroid blood island centered above the uro-genital opening. Expression persists in circulating erythroblasts but is lost in mature erythrocytes.

The protein is Zinc finger protein draculin of Danio rerio (Zebrafish).